We begin with the raw amino-acid sequence, 521 residues long: Sodium/hydrogen exchanger 5 (521 aa).

The Cytoplasmic segment spans residues 1 to 23; sequence MEEVMISPVEHDPQGQVKQQQAA. A helical membrane pass occupies residues 24–44; that stretch reads GVGILLQIMMLVLSFVLGHVL. Residues 45–48 are Lumenal-facing; that stretch reads RRHR. A helical transmembrane segment spans residues 49 to 69; that stretch reads FHYLPEASGSLLIGLIVGILA. Over 70-86 the chain is Cytoplasmic; sequence NISDTETSIRTWFNFHE. The helical intramembrane region spans 87–107; it reads EFFFLFLLPPIIFQSGFSLQP. Over 108–115 the chain is Cytoplasmic; that stretch reads KPFFSNFG. Residues 116 to 136 traverse the membrane as a helical segment; sequence AIVTFAIIGTFVASVVTGGLV. Residues 137 to 141 are Lumenal-facing; it reads YLGGS. 2 consecutive intramembrane regions (helical) follow at residues 142-162 and 166-186; these read MYLM…LISA and VTVL…ALVF. At 187-222 the chain is on the lumenal side; it reads GESVLNDAMAISLYRTMSLVNRQSSSGEHFFMVVIR. Residues 223–243 form a helical membrane-spanning segment; sequence FFETFAGSMSAGVGVGFTSAL. At 244–271 the chain is on the cytoplasmic side; sequence LFKYAGLDTENLQNLECCLFVLFPYFSY. The helical transmembrane segment at 272 to 292 threads the bilayer; it reads MLAEGVGLSGIVSILFTGIVM. At 293–310 the chain is on the lumenal side; sequence KRYTFSNLSEASQSFVSS. Residue Asn299 is glycosylated (N-linked (GlcNAc...) asparagine). A helical membrane pass occupies residues 311 to 331; that stretch reads FFHLISSLAETFTFIYMGFDI. At 332-340 the chain is on the cytoplasmic side; that stretch reads AMEQHSWSH. A helical membrane pass occupies residues 341–361; sequence VGFILFSILFIGVARAVNVFG. The Lumenal portion of the chain corresponds to 362–382; that stretch reads CAYLVNLFRQENQKIPMKHQK. A helical membrane pass occupies residues 383–402; it reads ALWYSGLRGAMAFALALQSL. Topologically, residues 403–411 are cytoplasmic; it reads HDLPEGHGQ. A helical transmembrane segment spans residues 412-432; it reads IIFTATTTIVVVTVLLIGGST. Topologically, residues 433-521 are lumenal; it reads GKMLEALEVV…NSGDGDGDGE (89 aa). Positions 453-480 are disordered; that stretch reads GFEESDHQYVPPPFSIGASSDEDTSSSG. Low complexity predominate over residues 467–480; it reads SIGASSDEDTSSSG.

It belongs to the monovalent cation:proton antiporter 1 (CPA1) transporter (TC 2.A.36) family. In terms of tissue distribution, expressed in roots, leaves, stems, flowers and siliques. Detected at low levels in roots and shoots.

It is found in the endosome membrane. The protein localises to the golgi apparatus. Its subcellular location is the trans-Golgi network membrane. It localises to the golgi stack membrane. The catalysed reaction is Na(+)(in) + H(+)(out) = Na(+)(out) + H(+)(in). The enzyme catalyses K(+)(in) + H(+)(out) = K(+)(out) + H(+)(in). Its function is as follows. Involved in trafficking to the vacuole. Required for cell proliferation and cell expansion, but not for cell differentiation. Acts in low affinity electroneutral exchange of protons for cations such as Na(+) or K(+) across membranes. May also exchange Li(+) and Cs(+) with a lower affinity. The polypeptide is Sodium/hydrogen exchanger 5 (NHX5) (Arabidopsis thaliana (Mouse-ear cress)).